The primary structure comprises 247 residues: Caffeoyl-CoA O-methyltransferase (247 aa).

Residue K21 participates in substrate binding. Residues T63, E85, 87–88 (GV), S93, D111, and A140 each bind S-adenosyl-L-methionine. D163 provides a ligand contact to substrate. A divalent metal cation is bound at residue D163. An S-adenosyl-L-methionine-binding site is contributed by D165. 2 residues coordinate a divalent metal cation: D189 and N190. Residue N194 participates in substrate binding.

It belongs to the class I-like SAM-binding methyltransferase superfamily. Cation-dependent O-methyltransferase family. CCoAMT subfamily. As to quaternary structure, homodimer. Requires Ca(2+) as cofactor. Mg(2+) is required as a cofactor. The cofactor is Zn(2+).

It carries out the reaction (E)-caffeoyl-CoA + S-adenosyl-L-methionine = (E)-feruloyl-CoA + S-adenosyl-L-homocysteine + H(+). It functions in the pathway aromatic compound metabolism; phenylpropanoid biosynthesis. In terms of biological role, methylates caffeoyl-CoA to feruloyl-CoA and 5-hydroxyferuloyl-CoA to sinapoyl-CoA. Plays a role in the synthesis of feruloylated polysaccharides. Involved in the reinforcement of the plant cell wall. Also involved in the responding to wounding or pathogen challenge by the increased formation of cell wall-bound ferulic acid polymers. The chain is Caffeoyl-CoA O-methyltransferase (CCOMT) from Medicago sativa (Alfalfa).